The primary structure comprises 441 residues: Ribulose bisphosphate carboxylase large chain (441 aa).

An N6,N6,N6-trimethyllysine modification is found at K5. N114 and T164 together coordinate substrate. Catalysis depends on K166, which acts as the Proton acceptor. K168 contributes to the substrate binding site. The Mg(2+) site is built by K192, D194, and E195. Residue K192 is modified to N6-carboxylysine. Catalysis depends on H285, which acts as the Proton acceptor. Substrate-binding residues include R286, H318, and S370.

It belongs to the RuBisCO large chain family. Type I subfamily. In terms of assembly, heterohexadecamer of 8 large chains and 8 small chains; disulfide-linked. The disulfide link is formed within the large subunit homodimers. The cofactor is Mg(2+). In terms of processing, the disulfide bond which can form in the large chain dimeric partners within the hexadecamer appears to be associated with oxidative stress and protein turnover.

Its subcellular location is the plastid. It localises to the chloroplast. It carries out the reaction 2 (2R)-3-phosphoglycerate + 2 H(+) = D-ribulose 1,5-bisphosphate + CO2 + H2O. The enzyme catalyses D-ribulose 1,5-bisphosphate + O2 = 2-phosphoglycolate + (2R)-3-phosphoglycerate + 2 H(+). RuBisCO catalyzes two reactions: the carboxylation of D-ribulose 1,5-bisphosphate, the primary event in carbon dioxide fixation, as well as the oxidative fragmentation of the pentose substrate in the photorespiration process. Both reactions occur simultaneously and in competition at the same active site. This chain is Ribulose bisphosphate carboxylase large chain, found in Pellaea rotundifolia (Button fern).